The chain runs to 406 residues: Tyrosine--tRNA ligase (406 aa).

The 'HIGH' region motif lies at proline 48–histidine 57. The 'KMSKS' region signature appears at lysine 232 to serine 236. Lysine 235 is a binding site for ATP. In terms of domain architecture, S4 RNA-binding spans methionine 339–arginine 401.

This sequence belongs to the class-I aminoacyl-tRNA synthetase family. TyrS type 2 subfamily. In terms of assembly, homodimer.

Its subcellular location is the cytoplasm. The catalysed reaction is tRNA(Tyr) + L-tyrosine + ATP = L-tyrosyl-tRNA(Tyr) + AMP + diphosphate + H(+). Catalyzes the attachment of tyrosine to tRNA(Tyr) in a two-step reaction: tyrosine is first activated by ATP to form Tyr-AMP and then transferred to the acceptor end of tRNA(Tyr). The protein is Tyrosine--tRNA ligase of Chlorobaculum tepidum (strain ATCC 49652 / DSM 12025 / NBRC 103806 / TLS) (Chlorobium tepidum).